The chain runs to 598 residues: Probable translation initiation factor IF-2 (598 aa).

The tr-type G domain occupies 3-225; the sequence is LRCPIVSVLG…GLAQRFLEQK (223 aa). The tract at residues 12-19 is G1; the sequence is GHVDHGKT. Residue 12–19 coordinates GTP; the sequence is GHVDHGKT. The segment at 37 to 41 is G2; it reads GITQH. The tract at residues 76 to 79 is G3; it reads DTPG. Residues 76 to 80 and 130 to 133 contribute to the GTP site; these read DTPGH and NKVD. Residues 130–133 are G4; it reads NKVD. The G5 stretch occupies residues 200 to 202; that stretch reads SAM.

Belongs to the TRAFAC class translation factor GTPase superfamily. Classic translation factor GTPase family. IF-2 subfamily.

In terms of biological role, function in general translation initiation by promoting the binding of the formylmethionine-tRNA to ribosomes. Seems to function along with eIF-2. In Methanococcus maripaludis (strain DSM 14266 / JCM 13030 / NBRC 101832 / S2 / LL), this protein is Probable translation initiation factor IF-2.